A 356-amino-acid polypeptide reads, in one-letter code: Glutamine synthetase cytosolic isozyme 1-4 (356 aa).

Residue Ser2 is modified to N-acetylserine. Residues Ser2 and Ser48 each carry the phosphoserine modification. Positions 19-99 (IIAEYIWIGG…VMCDAYTPAG (81 aa)) constitute a GS beta-grasp domain. A disordered region spans residues 37 to 66 (ARTLPGPVTDPSQLPKWNYDGSSTGQAPGD). The 251-residue stretch at 106–356 (KRHAAAKIFE…IAESTILWKP (251 aa)) folds into the GS catalytic domain.

Belongs to the glutamine synthetase family. As to quaternary structure, homooctamer. Interacts with GRF3. Expressed in the pericycle in the region of lateral root emergence.

It is found in the cytoplasm. It carries out the reaction L-glutamate + NH4(+) + ATP = L-glutamine + ADP + phosphate + H(+). In terms of biological role, high-affinity glutamine synthetase. May contribute to the homeostatic control of glutamine synthesis in roots. This is Glutamine synthetase cytosolic isozyme 1-4 from Arabidopsis thaliana (Mouse-ear cress).